Consider the following 401-residue polypeptide: Tyrosine--tRNA ligase (401 aa).

Residues 42–51 (PTAPDLHLGH) carry the 'HIGH' region motif. A 'KMSKS' region motif is present at residues 226 to 230 (KMSKS). Lysine 229 provides a ligand contact to ATP. Residues 336–397 (IALAQLLKQI…GKRRIAKLSI (62 aa)) form the S4 RNA-binding domain.

It belongs to the class-I aminoacyl-tRNA synthetase family. TyrS type 2 subfamily. In terms of assembly, homodimer.

It is found in the cytoplasm. It catalyses the reaction tRNA(Tyr) + L-tyrosine + ATP = L-tyrosyl-tRNA(Tyr) + AMP + diphosphate + H(+). Functionally, catalyzes the attachment of tyrosine to tRNA(Tyr) in a two-step reaction: tyrosine is first activated by ATP to form Tyr-AMP and then transferred to the acceptor end of tRNA(Tyr). The chain is Tyrosine--tRNA ligase from Legionella pneumophila (strain Lens).